The chain runs to 696 residues: Methionine--tRNA ligase (696 aa).

The 'HIGH' region signature appears at 12–22; that stretch reads PYANGAIHLGH. Zn(2+)-binding residues include Cys-143, Cys-146, Cys-156, and Cys-159. Residues 336 to 340 carry the 'KMSKS' region motif; the sequence is KMSKS. Lys-339 lines the ATP pocket. The interval 556–580 is disordered; sequence SLAPAPEAQSQQRHAEHQQNEVTAE. The region spanning 591-696 is the tRNA-binding domain; sequence DFMKVDLRIV…SGAQPGMRVK (106 aa).

It belongs to the class-I aminoacyl-tRNA synthetase family. MetG type 1 subfamily. In terms of assembly, homodimer. Requires Zn(2+) as cofactor.

The protein localises to the cytoplasm. It catalyses the reaction tRNA(Met) + L-methionine + ATP = L-methionyl-tRNA(Met) + AMP + diphosphate. Is required not only for elongation of protein synthesis but also for the initiation of all mRNA translation through initiator tRNA(fMet) aminoacylation. This is Methionine--tRNA ligase from Dechloromonas aromatica (strain RCB).